We begin with the raw amino-acid sequence, 877 residues long: DNA polymerase I (877 aa).

Residues 180–272 enclose the 5'-3' exonuclease domain; it reads TPSQFIDLKA…GLEDTLLKEK (93 aa). The 3'-5' exonuclease domain occupies 312–468; the sequence is FEIVTDKSSV…AKEKMMAELI (157 aa).

The protein belongs to the DNA polymerase type-A family. As to quaternary structure, single-chain monomer with multiple functions.

It carries out the reaction DNA(n) + a 2'-deoxyribonucleoside 5'-triphosphate = DNA(n+1) + diphosphate. Functionally, in addition to polymerase activity, this DNA polymerase exhibits 3'-5' and 5'-3' exonuclease activity. In Lactococcus lactis subsp. cremoris (strain MG1363), this protein is DNA polymerase I (polA).